The primary structure comprises 279 residues: Biotin synthase (279 aa).

The region spanning 2–228 (KTIMLCAICS…ETRVMIAGGR (227 aa)) is the Radical SAM core domain. [4Fe-4S] cluster contacts are provided by Cys-17, Cys-21, and Cys-24. Residues Cys-61, Cys-96, Cys-154, and Arg-221 each coordinate [2Fe-2S] cluster.

The protein belongs to the radical SAM superfamily. Biotin synthase family. In terms of assembly, homodimer. It depends on [4Fe-4S] cluster as a cofactor. Requires [2Fe-2S] cluster as cofactor.

It catalyses the reaction (4R,5S)-dethiobiotin + (sulfur carrier)-SH + 2 reduced [2Fe-2S]-[ferredoxin] + 2 S-adenosyl-L-methionine = (sulfur carrier)-H + biotin + 2 5'-deoxyadenosine + 2 L-methionine + 2 oxidized [2Fe-2S]-[ferredoxin]. Its pathway is cofactor biosynthesis; biotin biosynthesis; biotin from 7,8-diaminononanoate: step 2/2. In terms of biological role, catalyzes the conversion of dethiobiotin (DTB) to biotin by the insertion of a sulfur atom into dethiobiotin via a radical-based mechanism. The protein is Biotin synthase of Campylobacter concisus (strain 13826).